The following is an 893-amino-acid chain: DNA gyrase subunit A (893 aa).

The Topo IIA-type catalytic domain occupies 35–501 (LPDVRDGLKP…GLEDLEDEDL (467 aa)). The active-site O-(5'-phospho-DNA)-tyrosine intermediate is the tyrosine 123. The short motif at 528–534 (QNRGGRG) is the GyrA-box element. The segment at 810–893 (VNEEDDNEEN…ASDNEEDSDE (84 aa)) is disordered. Acidic residues-rich tracts occupy residues 812-821 (EEDDNEENAD) and 852-862 (DAEMESVESPE). Residues 863–879 (NDDRIDIRQDFMDRVNE) are compositionally biased toward basic and acidic residues. Residues 880–893 (DIESASDNEEDSDE) show a composition bias toward acidic residues.

It belongs to the type II topoisomerase GyrA/ParC subunit family. As to quaternary structure, heterotetramer, composed of two GyrA and two GyrB chains. In the heterotetramer, GyrA contains the active site tyrosine that forms a transient covalent intermediate with DNA, while GyrB binds cofactors and catalyzes ATP hydrolysis.

The protein resides in the cytoplasm. The enzyme catalyses ATP-dependent breakage, passage and rejoining of double-stranded DNA.. A type II topoisomerase that negatively supercoils closed circular double-stranded (ds) DNA in an ATP-dependent manner to modulate DNA topology and maintain chromosomes in an underwound state. Negative supercoiling favors strand separation, and DNA replication, transcription, recombination and repair, all of which involve strand separation. Also able to catalyze the interconversion of other topological isomers of dsDNA rings, including catenanes and knotted rings. Type II topoisomerases break and join 2 DNA strands simultaneously in an ATP-dependent manner. This is DNA gyrase subunit A from Staphylococcus epidermidis (strain ATCC 35984 / DSM 28319 / BCRC 17069 / CCUG 31568 / BM 3577 / RP62A).